Here is a 142-residue protein sequence, read N- to C-terminus: Chorion class A protein Ld19 (142 aa).

Residues methionine 1–serine 18 form the signal peptide.

The protein belongs to the chorion protein family.

Its function is as follows. This protein is one of many from the eggshell of the gypsy moth. This Lymantria dispar (Gypsy moth) protein is Chorion class A protein Ld19.